A 460-amino-acid polypeptide reads, in one-letter code: RING finger protein DG17 (460 aa).

Residues 27 to 67 (CPICFEFIYKKQIYQCKSGHHACKECWEKSLETKKECMTCK) form an RING-type zinc finger. 2 TRAF-type zinc fingers span residues 141–194 (SHLI…KKEL) and 196–253 (THYK…SELQ). Residues 269–294 (IEKLTNQVGQSKKTHDELLKKIEDLS) adopt a coiled-coil conformation. The MATH domain maps to 320–448 (GYRNKWIISN…DDKLIIEIYI (129 aa)).

Belongs to the TNF receptor-associated factor family. A subfamily.

The protein resides in the cytoplasm. Functionally, probable adapter protein and signal transducer that links members of the tumor necrosis factor receptor family to different signaling pathways by association with the receptor cytoplasmic domain and kinases. This Dictyostelium discoideum (Social amoeba) protein is RING finger protein DG17 (zfaA).